The primary structure comprises 368 residues: S-adenosylmethionine decarboxylase proenzyme 1 (368 aa).

Residues E9 and R12 contribute to the active site. S69 acts as the Schiff-base intermediate with substrate; via pyruvic acid in catalysis. S69 carries the post-translational modification Pyruvic acid (Ser); by autocatalysis. The active-site Proton donor; for catalytic activity is C83. Residues S234 and H247 each act as proton acceptor; for processing activity in the active site.

This sequence belongs to the eukaryotic AdoMetDC family. The cofactor is pyruvate. Is synthesized initially as an inactive proenzyme. Formation of the active enzyme involves a self-maturation process in which the active site pyruvoyl group is generated from an internal serine residue via an autocatalytic post-translational modification. Two non-identical subunits are generated from the proenzyme in this reaction, and the pyruvate is formed at the N-terminus of the alpha chain, which is derived from the carboxyl end of the proenzyme. The post-translation cleavage follows an unusual pathway, termed non-hydrolytic serinolysis, in which the side chain hydroxyl group of the serine supplies its oxygen atom to form the C-terminus of the beta chain, while the remainder of the serine residue undergoes an oxidative deamination to produce ammonia and the pyruvoyl group blocking the N-terminus of the alpha chain.

The enzyme catalyses S-adenosyl-L-methionine + H(+) = S-adenosyl 3-(methylsulfanyl)propylamine + CO2. It participates in amine and polyamine biosynthesis; S-adenosylmethioninamine biosynthesis; S-adenosylmethioninamine from S-adenosyl-L-methionine: step 1/1. The polypeptide is S-adenosylmethionine decarboxylase proenzyme 1 (SAMDC1) (Brassica juncea (Indian mustard)).